Consider the following 768-residue polypeptide: Protein transport protein Sec23A (768 aa).

An N-acetylthreonine modification is found at T2. Zn(2+)-binding residues include C61, C66, C85, and C88. The residue at position 308 (T308) is a Phosphothreonine. The stretch at 632-718 is one Gelsolin-like repeat; sequence PEPVLLDSSS…EHGGSQARFL (87 aa).

The protein belongs to the SEC23/SEC24 family. SEC23 subfamily. As to quaternary structure, COPII is composed of at least five proteins: the Sec23/24 complex, the Sec13/31 complex and Sar1. Interacts with SEC23IP. Interacts with HTR4. Interacts with SEC16A. Interacts with SLC6A4. Interacts (as part of the Sec23/24 complex) with SEC22B; recruits SEC22B into COPII-coated vesicles and allows the transport of this cargo from the endoplasmic reticulum to the Golgi. Interacts (via Gelsolin-like repeat) with MIA2 and MIA3; specifically involved in the transport of large cargos like the collagen COL7A1. Interacts with DDHD1. Interacts with TMEM39A. Interacts with SACM1L; this interaction is reduced in the absence of TMEM39A. Interacts with kinase FAM20C; transport of FAM20C from the endoplasmic reticulum to the Golgi is likely to be mediated by COPII vesicles.

It localises to the cytoplasmic vesicle. It is found in the COPII-coated vesicle membrane. The protein resides in the endoplasmic reticulum membrane. The protein localises to the cytoplasm. Its subcellular location is the cytosol. Its function is as follows. Component of the coat protein complex II (COPII) which promotes the formation of transport vesicles from the endoplasmic reticulum (ER). The coat has two main functions, the physical deformation of the endoplasmic reticulum membrane into vesicles and the selection of cargo molecules for their transport to the Golgi complex. Required for the translocation of insulin-induced glucose transporter SLC2A4/GLUT4 to the cell membrane. The sequence is that of Protein transport protein Sec23A from Bos taurus (Bovine).